Consider the following 334-residue polypeptide: Ornithine carbamoyltransferase (334 aa).

Carbamoyl phosphate is bound by residues 57-60, glutamine 84, arginine 108, and 135-138; these read STRT and HPTQ. Residues asparagine 169, aspartate 233, and 237–238 each bind L-ornithine; that span reads SM. Carbamoyl phosphate-binding positions include 275–276 and arginine 320; that span reads CL.

This sequence belongs to the aspartate/ornithine carbamoyltransferase superfamily. OTCase family.

Its subcellular location is the cytoplasm. The catalysed reaction is carbamoyl phosphate + L-ornithine = L-citrulline + phosphate + H(+). It participates in amino-acid biosynthesis; L-arginine biosynthesis; L-arginine from L-ornithine and carbamoyl phosphate: step 1/3. Functionally, reversibly catalyzes the transfer of the carbamoyl group from carbamoyl phosphate (CP) to the N(epsilon) atom of ornithine (ORN) to produce L-citrulline. The chain is Ornithine carbamoyltransferase from Vibrio cholerae serotype O1 (strain ATCC 39315 / El Tor Inaba N16961).